The chain runs to 137 residues: Large ribosomal subunit protein uL14 (137 aa).

Belongs to the universal ribosomal protein uL14 family. In terms of assembly, part of the 50S ribosomal subunit. Forms a cluster with proteins L3 and L24e, part of which may contact the 16S rRNA in 2 intersubunit bridges.

Functionally, binds to 23S rRNA. Forms part of two intersubunit bridges in the 70S ribosome. In Ignicoccus hospitalis (strain KIN4/I / DSM 18386 / JCM 14125), this protein is Large ribosomal subunit protein uL14.